Here is a 624-residue protein sequence, read N- to C-terminus: (-)-beta-phellandrene synthase 3, chloroplastic (624 aa).

The N-terminal 48 residues, 1–48 (MAIVSSVPLASKSCLHKSLISSIHKLKPFCRTIPTLGMSRPGKYVMPS), are a transit peptide targeting the chloroplast. Positions 375, 379, and 527 each coordinate Mg(2+). Positions 375–379 (DDMYD) match the DDXXD motif motif.

Belongs to the terpene synthase family. Tpsd subfamily. Mg(2+) is required as a cofactor. It depends on Mn(2+) as a cofactor.

It is found in the plastid. Its subcellular location is the chloroplast. It carries out the reaction (2E)-geranyl diphosphate = (-)-beta-phellandrene + diphosphate. It functions in the pathway terpene metabolism; oleoresin biosynthesis. Its function is as follows. Terpene synthase (TPS) involved in the biosynthesis of monoterpene natural products included in conifer oleoresin secretions and volatile emissions; these compounds contribute to biotic and abiotic stress defense against herbivores and pathogens. Catalyzes the conversion of (2E)-geranyl diphosphate (GPP) to (-)-beta-phellandrene. This chain is (-)-beta-phellandrene synthase 3, chloroplastic, found in Picea sitchensis (Sitka spruce).